The chain runs to 700 residues: Putative cysteine-rich receptor-like protein kinase 30 (700 aa).

The N-terminal stretch at 1-24 is a signal peptide; the sequence is MRQNNLFSLIFWLVPVSLIIVVSA. 2 Gnk2-homologous domains span residues 25 to 129 and 135 to 250; these read QLCS…NQPS and LESV…LYPF. At 25–285 the chain is on the extracellular side; the sequence is QLCSEKFGTF…KDEKTIHTGT (261 aa). N-linked (GlcNAc...) asparagine glycans are attached at residues asparagine 63, asparagine 105, asparagine 146, asparagine 150, and asparagine 191. A helical transmembrane segment spans residues 286-306; the sequence is IIGIVIVVAMVIIMALLALGV. At 307–700 the chain is on the cytoplasmic side; the sequence is SVCRSRKKYQ…SKSMYRNTED (394 aa). In terms of domain architecture, Protein kinase spans 346–626; the sequence is FLASNKIGQG…IFQMLTNSSI (281 aa). ATP-binding positions include 352–360 and lysine 374; that span reads IGQGGFGEV. Residue aspartate 474 is the Proton acceptor of the active site. Serine 478 is subject to Phosphoserine. Residue threonine 514 is modified to Phosphothreonine. Tyrosine 522 carries the phosphotyrosine modification.

Belongs to the protein kinase superfamily. Ser/Thr protein kinase family. CRK subfamily.

The protein resides in the membrane. It carries out the reaction L-seryl-[protein] + ATP = O-phospho-L-seryl-[protein] + ADP + H(+). The enzyme catalyses L-threonyl-[protein] + ATP = O-phospho-L-threonyl-[protein] + ADP + H(+). In Arabidopsis thaliana (Mouse-ear cress), this protein is Putative cysteine-rich receptor-like protein kinase 30 (CRK30).